A 173-amino-acid chain; its full sequence is MINIDYIKSKIRDVPDFPKKGIVFKDITPLFLEPKIIEKIVDDFADFAKSLNIDAIIGAESRGFLFAAPLSIKLNKPFILVRKPNKLPNDVYSAEYTLEYGSSRVEMHKDALKPNQRVLIVDDLLATGGTVAAIENLVRQAKGIVAGSVYLIRLGFLKGEEKLSGKVHALINY.

It belongs to the purine/pyrimidine phosphoribosyltransferase family. Homodimer.

It is found in the cytoplasm. The catalysed reaction is AMP + diphosphate = 5-phospho-alpha-D-ribose 1-diphosphate + adenine. It functions in the pathway purine metabolism; AMP biosynthesis via salvage pathway; AMP from adenine: step 1/1. Functionally, catalyzes a salvage reaction resulting in the formation of AMP, that is energically less costly than de novo synthesis. This chain is Adenine phosphoribosyltransferase, found in Ureaplasma parvum serovar 3 (strain ATCC 27815 / 27 / NCTC 11736).